Reading from the N-terminus, the 64-residue chain is MRCVPVFIILLLLIASAPGVDAQPKTKYNAPLTSLHDNAKGILQEHWNKRCCPRRLACCIIGRK.

The N-terminal stretch at 1 to 22 (MRCVPVFIILLLLIASAPGVDA) is a signal peptide. The propeptide occupies 23 to 48 (QPKTKYNAPLTSLHDNAKGILQEHWN). Ile61 is subject to Isoleucine amide.

The protein belongs to the conotoxin T superfamily. Post-translationally, contains 2 disulfide bonds that can be either 'C1-C3, C2-C4' or 'C1-C4, C2-C3', since these disulfide connectivities have been observed for conotoxins with cysteine framework V (for examples, see AC P0DQQ7 and AC P81755). As to expression, expressed by the venom duct.

The protein localises to the secreted. This is Conotoxin Ca5.3 from Conus caracteristicus (Characteristic cone).